A 375-amino-acid polypeptide reads, in one-letter code: Queuine tRNA-ribosyltransferase (375 aa).

The active-site Proton acceptor is the D89. Residues 89-93 (DSGGF), D143, Q187, and G214 contribute to the substrate site. The RNA binding stretch occupies residues 245 to 251 (GVGKPED). The active-site Nucleophile is the D264. Positions 269–273 (TRNAR) are RNA binding; important for wobble base 34 recognition. Residues C302, C304, C307, and H333 each coordinate Zn(2+).

The protein belongs to the queuine tRNA-ribosyltransferase family. As to quaternary structure, homodimer. Within each dimer, one monomer is responsible for RNA recognition and catalysis, while the other monomer binds to the replacement base PreQ1. Requires Zn(2+) as cofactor.

It carries out the reaction 7-aminomethyl-7-carbaguanine + guanosine(34) in tRNA = 7-aminomethyl-7-carbaguanosine(34) in tRNA + guanine. The protein operates within tRNA modification; tRNA-queuosine biosynthesis. Catalyzes the base-exchange of a guanine (G) residue with the queuine precursor 7-aminomethyl-7-deazaguanine (PreQ1) at position 34 (anticodon wobble position) in tRNAs with GU(N) anticodons (tRNA-Asp, -Asn, -His and -Tyr). Catalysis occurs through a double-displacement mechanism. The nucleophile active site attacks the C1' of nucleotide 34 to detach the guanine base from the RNA, forming a covalent enzyme-RNA intermediate. The proton acceptor active site deprotonates the incoming PreQ1, allowing a nucleophilic attack on the C1' of the ribose to form the product. After dissociation, two additional enzymatic reactions on the tRNA convert PreQ1 to queuine (Q), resulting in the hypermodified nucleoside queuosine (7-(((4,5-cis-dihydroxy-2-cyclopenten-1-yl)amino)methyl)-7-deazaguanosine). This is Queuine tRNA-ribosyltransferase from Aliivibrio salmonicida (strain LFI1238) (Vibrio salmonicida (strain LFI1238)).